A 235-amino-acid polypeptide reads, in one-letter code: Pyridoxine/pyridoxamine 5'-phosphate oxidase (235 aa).

Residues 30 to 33 (RQEY) and lysine 88 contribute to the substrate site. Residues 83–88 (RTVLLK), 98–99 (YT), arginine 104, lysine 105, and glutamine 127 each bind FMN. Positions 145, 149, and 153 each coordinate substrate. Residues 162-163 (QS) and tryptophan 207 contribute to the FMN site. 213 to 215 (RLH) provides a ligand contact to substrate. Arginine 217 contributes to the FMN binding site.

Belongs to the pyridoxamine 5'-phosphate oxidase family. As to quaternary structure, homodimer. The cofactor is FMN.

It carries out the reaction pyridoxamine 5'-phosphate + O2 + H2O = pyridoxal 5'-phosphate + H2O2 + NH4(+). The catalysed reaction is pyridoxine 5'-phosphate + O2 = pyridoxal 5'-phosphate + H2O2. The protein operates within cofactor metabolism; pyridoxal 5'-phosphate salvage; pyridoxal 5'-phosphate from pyridoxamine 5'-phosphate: step 1/1. Its pathway is cofactor metabolism; pyridoxal 5'-phosphate salvage; pyridoxal 5'-phosphate from pyridoxine 5'-phosphate: step 1/1. Its function is as follows. Catalyzes the oxidation of either pyridoxine 5'-phosphate (PNP) or pyridoxamine 5'-phosphate (PMP) into pyridoxal 5'-phosphate (PLP). In Bacteroides fragilis (strain YCH46), this protein is Pyridoxine/pyridoxamine 5'-phosphate oxidase.